The primary structure comprises 463 residues: T-box transcription factor TBX1-B (463 aa).

2 disordered regions span residues 39–58 (SPSP…PCSA) and 75–102 (GASS…APVK). A compositionally biased stretch (low complexity) spans 75-96 (GASSSSCASSTPGSGSTGSSSG). Residues 119-297 (LWDEFNQLGT…SNPFAKGFRD (179 aa)) constitute a DNA-binding region (T-box). Disordered stretches follow at residues 320-343 (RSRN…RREY) and 367-406 (SPSL…HHHP). The span at 323-332 (NPVSSPPQNG) shows a compositional bias: polar residues. The span at 333 to 343 (SDKDGDGRREY) shows a compositional bias: basic and acidic residues. A compositionally biased stretch (low complexity) spans 367–380 (SPSLPVPGGLVPLS). The Nuclear localization signal motif lies at 420 to 431 (KTRPAPYPLPSI).

As to quaternary structure, binds DNA as a dimer. Interacts with dscr6/ripply3.

Its subcellular location is the nucleus. Functionally, probable transcriptional regulator involved in developmental processes. Binds to the palindromic T site 5'-TTCACACCTAGGTGTGAA-3' DNA sequence. Induces pre-placodal ectoderm (PPE) gene expression in regions where RIPPLY3 is absent. Plays a role in the formation of the anteroposterior (AP) axis during embryonic development; required to establish the posterolateral border of the pre-placodal ectoderm (PPE) acting downstream of the retinoic acid receptor (RAR) signaling. Its function is as follows. Probable transcriptional regulator involved in developmental processes. Binds to the palindromic T site 5'-TTCACACCTAGGTGTGAA-3' DNA sequence. Is required for normal development of the pharyngeal arch arteries. The chain is T-box transcription factor TBX1-B (tbx1-b) from Xenopus laevis (African clawed frog).